Consider the following 492-residue polypeptide: Probable glycine dehydrogenase (decarboxylating) subunit 2 (492 aa).

Lysine 274 carries the N6-(pyridoxal phosphate)lysine modification.

This sequence belongs to the GcvP family. C-terminal subunit subfamily. In terms of assembly, the glycine cleavage system is composed of four proteins: P, T, L and H. In this organism, the P 'protein' is a heterodimer of two subunits. The cofactor is pyridoxal 5'-phosphate.

The enzyme catalyses N(6)-[(R)-lipoyl]-L-lysyl-[glycine-cleavage complex H protein] + glycine + H(+) = N(6)-[(R)-S(8)-aminomethyldihydrolipoyl]-L-lysyl-[glycine-cleavage complex H protein] + CO2. Its function is as follows. The glycine cleavage system catalyzes the degradation of glycine. The P protein binds the alpha-amino group of glycine through its pyridoxal phosphate cofactor; CO(2) is released and the remaining methylamine moiety is then transferred to the lipoamide cofactor of the H protein. In Staphylococcus haemolyticus (strain JCSC1435), this protein is Probable glycine dehydrogenase (decarboxylating) subunit 2.